Here is a 303-residue protein sequence, read N- to C-terminus: UDP-3-O-acyl-N-acetylglucosamine deacetylase (303 aa).

His78, His237, and Asp241 together coordinate Zn(2+). Catalysis depends on His264, which acts as the Proton donor.

Belongs to the LpxC family. Requires Zn(2+) as cofactor.

The catalysed reaction is a UDP-3-O-[(3R)-3-hydroxyacyl]-N-acetyl-alpha-D-glucosamine + H2O = a UDP-3-O-[(3R)-3-hydroxyacyl]-alpha-D-glucosamine + acetate. The protein operates within glycolipid biosynthesis; lipid IV(A) biosynthesis; lipid IV(A) from (3R)-3-hydroxytetradecanoyl-[acyl-carrier-protein] and UDP-N-acetyl-alpha-D-glucosamine: step 2/6. Catalyzes the hydrolysis of UDP-3-O-myristoyl-N-acetylglucosamine to form UDP-3-O-myristoylglucosamine and acetate, the committed step in lipid A biosynthesis. This Azotobacter vinelandii (strain DJ / ATCC BAA-1303) protein is UDP-3-O-acyl-N-acetylglucosamine deacetylase.